The chain runs to 514 residues: 2,3-bisphosphoglycerate-independent phosphoglycerate mutase (514 aa).

Mn(2+)-binding residues include D14 and S64. S64 (phosphoserine intermediate) is an active-site residue. Substrate-binding positions include H125, 155 to 156, R187, R193, 263 to 266, and K336; these read RD and RADR. Mn(2+) is bound by residues D403, H407, D444, H445, and H463.

Belongs to the BPG-independent phosphoglycerate mutase family. As to quaternary structure, monomer. Requires Mn(2+) as cofactor.

The enzyme catalyses (2R)-2-phosphoglycerate = (2R)-3-phosphoglycerate. It functions in the pathway carbohydrate degradation; glycolysis; pyruvate from D-glyceraldehyde 3-phosphate: step 3/5. In terms of biological role, catalyzes the interconversion of 2-phosphoglycerate and 3-phosphoglycerate. The chain is 2,3-bisphosphoglycerate-independent phosphoglycerate mutase from Shewanella halifaxensis (strain HAW-EB4).